Consider the following 124-residue polypeptide: Small ribosomal subunit protein uS12 (124 aa).

D89 carries the post-translational modification 3-methylthioaspartic acid.

The protein belongs to the universal ribosomal protein uS12 family. In terms of assembly, part of the 30S ribosomal subunit. Contacts proteins S8 and S17. May interact with IF1 in the 30S initiation complex.

Functionally, with S4 and S5 plays an important role in translational accuracy. Its function is as follows. Interacts with and stabilizes bases of the 16S rRNA that are involved in tRNA selection in the A site and with the mRNA backbone. Located at the interface of the 30S and 50S subunits, it traverses the body of the 30S subunit contacting proteins on the other side and probably holding the rRNA structure together. The combined cluster of proteins S8, S12 and S17 appears to hold together the shoulder and platform of the 30S subunit. This is Small ribosomal subunit protein uS12 from Pectobacterium atrosepticum (strain SCRI 1043 / ATCC BAA-672) (Erwinia carotovora subsp. atroseptica).